Here is a 1095-residue protein sequence, read N- to C-terminus: Actin cross-linking toxin VgrG1 (1095 aa).

An ACD domain is found at 712–1095 (TPDFPTHFPK…TVIQQVESLV (384 aa)). 723-727 (SIGIE) serves as a coordination point for ATP. Positions 727 and 789 each coordinate Mg(2+). Ser-792 lines the ATP pocket. Gln-873 contacts Mg(2+). An ATP-binding site is contributed by Arg-979. Glu-1050 contacts Mg(2+).

Belongs to the VgrG protein family. In terms of assembly, interacts with protein VC1417. Mg(2+) is required as a cofactor.

It is found in the secreted. It localises to the host cytoplasm. Its subcellular location is the host cytosol. Its function is as follows. Part of the type VI secretion system (T6SS) specialized secretion system, which delivers several virulence factors in both prokaryotic and eukaryotic cells during infection. Forms the spike at the tip of the elongating tube probably formed by hemolysin co-regulated protein/Hcp. Allows the delivery of the TseL antibacterial toxin to target cells where it exerts its toxicity. Also acts directly as an actin-directed toxin that catalyzes the covalent cross-linking of host cytoplasmic monomeric actin. Mediates the cross-link between 'Lys-50' of one monomer and 'Glu-270' of another actin monomer, resulting in formation of highly toxic actin oligomers that cause cell rounding. The toxin can be highly efficient at very low concentrations by acting on formin homology family proteins: toxic actin oligomers bind with high affinity to formins and adversely affect both nucleation and elongation abilities of formins, causing their potent inhibition in both profilin-dependent and independent manners. Acts as an acid--amino-acid ligase that transfers the gamma-phosphoryl group of ATP to the 'Glu-270' actin residue, resulting in the formation of an activated acyl phosphate intermediate. This intermediate is further hydrolyzed and the energy of hydrolysis is utilized for the formation of the amide bond between actin subunits. The sequence is that of Actin cross-linking toxin VgrG1 from Vibrio cholerae serotype O1 (strain ATCC 39541 / Classical Ogawa 395 / O395).